The sequence spans 509 residues: Sensor histidine kinase TrcS (509 aa).

Helical transmembrane passes span 24–44 (LLLG…VVSV) and 188–208 (VALV…VVGY). Positions 207–269 (GYALRPLRRV…LLDNVDGALA (63 aa)) constitute an HAMP domain. One can recognise a Histidine kinase domain in the interval 284–502 (DASHELRTPL…VFRVRLPMIE (219 aa)). His-287 carries the phosphohistidine; by autocatalysis modification.

A divalent metal cation serves as cofactor. In terms of processing, autophosphorylated.

Its subcellular location is the cell membrane. The catalysed reaction is ATP + protein L-histidine = ADP + protein N-phospho-L-histidine.. In terms of biological role, member of the two-component regulatory system TrcS/TrcR. Phosphorylates TrcR. The TrcR-TrcS regulatory system may act as a transition regulatory system involved in adapting to an intracellular environment and transitioning from latency to reactivation. This is Sensor histidine kinase TrcS from Mycobacterium tuberculosis (strain ATCC 25618 / H37Rv).